A 366-amino-acid polypeptide reads, in one-letter code: S-adenosylmethionine:tRNA ribosyltransferase-isomerase (366 aa).

The protein belongs to the QueA family. In terms of assembly, monomer.

Its subcellular location is the cytoplasm. The catalysed reaction is 7-aminomethyl-7-carbaguanosine(34) in tRNA + S-adenosyl-L-methionine = epoxyqueuosine(34) in tRNA + adenine + L-methionine + 2 H(+). Its pathway is tRNA modification; tRNA-queuosine biosynthesis. Transfers and isomerizes the ribose moiety from AdoMet to the 7-aminomethyl group of 7-deazaguanine (preQ1-tRNA) to give epoxyqueuosine (oQ-tRNA). The sequence is that of S-adenosylmethionine:tRNA ribosyltransferase-isomerase from Agrobacterium fabrum (strain C58 / ATCC 33970) (Agrobacterium tumefaciens (strain C58)).